The chain runs to 353 residues: Photosystem II protein D1 (353 aa).

N-acetylthreonine is present on T2. Position 2 is a phosphothreonine (T2). 3 consecutive transmembrane segments (helical) span residues 29-46 (YIGWFGVLMIPTLLTATS), 118-133 (HFLLGVACYMGREWEL), and 142-156 (WIVVAYSAPVAAATA). H118 provides a ligand contact to chlorophyll a. Y126 is a pheophytin a binding site. Positions 170 and 189 each coordinate [CaMn4O5] cluster. A helical membrane pass occupies residues 197-218 (FHMLGVAGVFGGSLFSAMHGSL). H198 provides a ligand contact to chlorophyll a. A quinone contacts are provided by residues H215 and 264–265 (SF). H215 is a Fe cation binding site. H272 serves as a coordination point for Fe cation. Residues 274 to 288 (FLAAWPVVGIWFTAL) form a helical membrane-spanning segment. [CaMn4O5] cluster is bound by residues H332, E333, D342, and A344. Positions 345–353 (AVDAPSISG) are excised as a propeptide.

This sequence belongs to the reaction center PufL/M/PsbA/D family. PSII is composed of 1 copy each of membrane proteins PsbA, PsbB, PsbC, PsbD, PsbE, PsbF, PsbH, PsbI, PsbJ, PsbK, PsbL, PsbM, PsbT, PsbX, PsbY, PsbZ, Psb30/Ycf12, at least 3 peripheral proteins of the oxygen-evolving complex and a large number of cofactors. It forms dimeric complexes. Requires The D1/D2 heterodimer binds P680, chlorophylls that are the primary electron donor of PSII, and subsequent electron acceptors. It shares a non-heme iron and each subunit binds pheophytin, quinone, additional chlorophylls, carotenoids and lipids. D1 provides most of the ligands for the Mn4-Ca-O5 cluster of the oxygen-evolving complex (OEC). There is also a Cl(-1) ion associated with D1 and D2, which is required for oxygen evolution. The PSII complex binds additional chlorophylls, carotenoids and specific lipids. as cofactor. Tyr-161 forms a radical intermediate that is referred to as redox-active TyrZ, YZ or Y-Z. Post-translationally, C-terminally processed by CTPA; processing is essential to allow assembly of the oxygen-evolving complex and thus photosynthetic growth.

The protein resides in the plastid. It is found in the chloroplast thylakoid membrane. The catalysed reaction is 2 a plastoquinone + 4 hnu + 2 H2O = 2 a plastoquinol + O2. Its function is as follows. Photosystem II (PSII) is a light-driven water:plastoquinone oxidoreductase that uses light energy to abstract electrons from H(2)O, generating O(2) and a proton gradient subsequently used for ATP formation. It consists of a core antenna complex that captures photons, and an electron transfer chain that converts photonic excitation into a charge separation. The D1/D2 (PsbA/PsbD) reaction center heterodimer binds P680, the primary electron donor of PSII as well as several subsequent electron acceptors. This chain is Photosystem II protein D1, found in Vicia faba (Broad bean).